Consider the following 338-residue polypeptide: MSTLRLLISDSYDPWFNLAVEECIFRQMPATQRVLFLWRNADTVVIGRAQNPWKECNTRRMEVDNVRLARRSSGGGAVFHDLGNTCFTFMAGKPEYDKTISTSIVLNALNALGVSAEASGRNDLVVKTVEGDRKVSGSAYRETKDRGFHHGTLLLNADLSRLANYLNPDKKKLAAKGITSVRSRVTNLTELLPGITHEQVCEAITKAFFAHYGERVEAEIISPDKTPDLPNFAETFARQSSWEWNFGQAPAFSHLLDERFSWGGVELHFDVEKGHITRAQVFTDSLNPAPLEAFAGRLQGCLYRADMLQQECEALLVDFPDQEKELRELSTWIAGAVR.

Positions Pro29–Val216 constitute a BPL/LPL catalytic domain. ATP is bound by residues Arg71, Gly76–Phe79, and Lys134. Lys134 lines the (R)-lipoate pocket.

Belongs to the LplA family. As to quaternary structure, monomer.

The protein resides in the cytoplasm. It carries out the reaction L-lysyl-[lipoyl-carrier protein] + (R)-lipoate + ATP = N(6)-[(R)-lipoyl]-L-lysyl-[lipoyl-carrier protein] + AMP + diphosphate + H(+). It functions in the pathway protein modification; protein lipoylation via exogenous pathway; protein N(6)-(lipoyl)lysine from lipoate: step 1/2. Its pathway is protein modification; protein lipoylation via exogenous pathway; protein N(6)-(lipoyl)lysine from lipoate: step 2/2. Catalyzes both the ATP-dependent activation of exogenously supplied lipoate to lipoyl-AMP and the transfer of the activated lipoyl onto the lipoyl domains of lipoate-dependent enzymes. In Shigella dysenteriae serotype 1 (strain Sd197), this protein is Lipoate-protein ligase A.